The following is a 231-amino-acid chain: Large ribosomal subunit protein uL1 (231 aa).

This sequence belongs to the universal ribosomal protein uL1 family. Part of the 50S ribosomal subunit.

Binds directly to 23S rRNA. The L1 stalk is quite mobile in the ribosome, and is involved in E site tRNA release. In terms of biological role, protein L1 is also a translational repressor protein, it controls the translation of the L11 operon by binding to its mRNA. The chain is Large ribosomal subunit protein uL1 from Alcanivorax borkumensis (strain ATCC 700651 / DSM 11573 / NCIMB 13689 / SK2).